Consider the following 283-residue polypeptide: Formamidopyrimidine-DNA glycosylase (283 aa).

The active-site Schiff-base intermediate with DNA is the P2. The Proton donor role is filled by E3. K61 acts as the Proton donor; for beta-elimination activity in catalysis. H94, R113, and K159 together coordinate DNA. Residues 245–279 form an FPG-type zinc finger; it reads DAYGREGESCRRCGAVMRREKFMNRSSFYCPKCQP. The active-site Proton donor; for delta-elimination activity is R269.

This sequence belongs to the FPG family. As to quaternary structure, monomer. The cofactor is Zn(2+).

It carries out the reaction Hydrolysis of DNA containing ring-opened 7-methylguanine residues, releasing 2,6-diamino-4-hydroxy-5-(N-methyl)formamidopyrimidine.. The enzyme catalyses 2'-deoxyribonucleotide-(2'-deoxyribose 5'-phosphate)-2'-deoxyribonucleotide-DNA = a 3'-end 2'-deoxyribonucleotide-(2,3-dehydro-2,3-deoxyribose 5'-phosphate)-DNA + a 5'-end 5'-phospho-2'-deoxyribonucleoside-DNA + H(+). In terms of biological role, involved in base excision repair of DNA damaged by oxidation or by mutagenic agents. Acts as a DNA glycosylase that recognizes and removes damaged bases. Has a preference for oxidized purines, such as 7,8-dihydro-8-oxoguanine (8-oxoG). Has AP (apurinic/apyrimidinic) lyase activity and introduces nicks in the DNA strand. Cleaves the DNA backbone by beta-delta elimination to generate a single-strand break at the site of the removed base with both 3'- and 5'-phosphates. This Mycolicibacterium paratuberculosis (strain ATCC BAA-968 / K-10) (Mycobacterium paratuberculosis) protein is Formamidopyrimidine-DNA glycosylase.